The sequence spans 285 residues: Secreted alkaline triacylglycerol lipase (285 aa).

The first 20 residues, Met-1–Ser-20, serve as a signal peptide directing secretion. The Nucleophile role is filled by Ser-159. Residues Asp-215 and His-268 each act as charge relay system in the active site.

Belongs to the AB hydrolase superfamily. FaeA family.

It is found in the secreted. It carries out the reaction a triacylglycerol + H2O = a diacylglycerol + a fatty acid + H(+). In terms of biological role, secreted alkaline lipase that hydrolyzes acylglycerol lipids such as triacylglycerols and consequently releases free fatty acid. Is able to hydrolyze tributyrin (1,2,3-tributyryl-glycerin). This Penicillium cyclopium protein is Secreted alkaline triacylglycerol lipase.